Reading from the N-terminus, the 83-residue chain is uncharacterized protein (83 aa).

The tract at residues 57-83 is disordered; sequence ESVEEEEEFEDYDEFEEEEEYYYDDEY.

This is an uncharacterized protein from Archaeoglobus fulgidus (strain ATCC 49558 / DSM 4304 / JCM 9628 / NBRC 100126 / VC-16).